The primary structure comprises 365 residues: Probable ethanolamine-phosphate cytidylyltransferase (365 aa).

Residues 344–365 (EERQRRKMGKNATEQTTIKTYA) are disordered. Residues 355–365 (ATEQTTIKTYA) show a composition bias toward polar residues.

The protein belongs to the cytidylyltransferase family.

The catalysed reaction is phosphoethanolamine + CTP + H(+) = CDP-ethanolamine + diphosphate. It participates in phospholipid metabolism; phosphatidylethanolamine biosynthesis; phosphatidylethanolamine from ethanolamine: step 2/3. The sequence is that of Probable ethanolamine-phosphate cytidylyltransferase from Schizosaccharomyces pombe (strain 972 / ATCC 24843) (Fission yeast).